The following is a 312-amino-acid chain: MKKLNIVFAGTPDISAQVLKDLYQSQHNIQAVLTQPDRAKGRGKKIQFSPVKEVAIANNTLVLQPLSFKKDPQVLEQIRELKPDVIVVIAYGIIVPQEFLDIPKYGCLNIHVSLLPKWRGAAPIQRAIQAGDSKTGICIMQMDAGLDTGDILNTLEVEIQDTDTSQSLHDKFAKLSIKPLLETLENIDTIKPQPQQGEPTYAHKITKQEGLIDFTKSAKEISCHIRAFTPWPSAFFMLEGEQVKVGDFEILEKSANDEVTAIIDITKNGFDIATNDKIIRFKQLQFPNKKMLNIADILNGKDLDKYIGYKIG.

113-116 (SLLP) serves as a coordination point for (6S)-5,6,7,8-tetrahydrofolate.

The protein belongs to the Fmt family.

The catalysed reaction is L-methionyl-tRNA(fMet) + (6R)-10-formyltetrahydrofolate = N-formyl-L-methionyl-tRNA(fMet) + (6S)-5,6,7,8-tetrahydrofolate + H(+). Its function is as follows. Attaches a formyl group to the free amino group of methionyl-tRNA(fMet). The formyl group appears to play a dual role in the initiator identity of N-formylmethionyl-tRNA by promoting its recognition by IF2 and preventing the misappropriation of this tRNA by the elongation apparatus. The sequence is that of Methionyl-tRNA formyltransferase from Francisella philomiragia subsp. philomiragia (strain ATCC 25017 / CCUG 19701 / FSC 153 / O#319-036).